The sequence spans 338 residues: 1-aminocyclopropane-1-carboxylate deaminase (338 aa).

At lysine 51 the chain carries N6-(pyridoxal phosphate)lysine. Residue serine 78 is the Nucleophile of the active site.

This sequence belongs to the ACC deaminase/D-cysteine desulfhydrase family. Homotrimer. The cofactor is pyridoxal 5'-phosphate.

The enzyme catalyses 1-aminocyclopropane-1-carboxylate + H2O = 2-oxobutanoate + NH4(+). Functionally, catalyzes a cyclopropane ring-opening reaction, the irreversible conversion of 1-aminocyclopropane-1-carboxylate (ACC) to ammonia and alpha-ketobutyrate. Allows growth on ACC as a nitrogen source. The polypeptide is 1-aminocyclopropane-1-carboxylate deaminase (Pseudomonas fluorescens).